Reading from the N-terminus, the 330-residue chain is Mas-related G-protein coupled receptor member X2 (330 aa).

Residues Met1–Pro33 lie on the Extracellular side of the membrane. A helical membrane pass occupies residues Val34–Leu54. Over Leu55–Ala63 the chain is Cytoplasmic. The chain crosses the membrane as a helical span at residues Phe64–Ile84. At Asn85–Ser96 the chain is on the extracellular side. The helical transmembrane segment at Ile97–Leu117 threads the bilayer. Topologically, residues Ser118–His144 are cytoplasmic. The chain crosses the membrane as a helical span at residues Leu145 to Gly165. Residues Lys166–Asp184 lie on the Extracellular side of the membrane. Residues Phe185–Leu205 form a helical membrane-spanning segment. At Leu206–Thr228 the chain is on the cytoplasmic side. The helical transmembrane segment at Val229–Ile249 threads the bilayer. Residues Trp250–Ser264 lie on the Extracellular side of the membrane. The chain crosses the membrane as a helical span at residues Val265–Phe285. Topologically, residues Arg286–Val330 are cytoplasmic.

It belongs to the G-protein coupled receptor 1 family. Mas subfamily.

The protein resides in the cell membrane. Mast cell-specific receptor for basic secretagogues, i.e. cationic amphiphilic drugs, as well as endo- or exogenous peptides, consisting of a basic head group and a hydrophobic core. Recognizes and binds small molecules containing a cyclized tetrahydroisoquinoline (THIQ), such as non-steroidal neuromuscular blocking drugs (NMBDs), including tubocurarine and atracurium. In response to these compounds, mediates pseudo-allergic reactions characterized by histamine release, inflammation and airway contraction. The polypeptide is Mas-related G-protein coupled receptor member X2 (MRGPRX2) (Pongo pygmaeus (Bornean orangutan)).